The primary structure comprises 96 residues: Prokineticin Bm8-d (96 aa).

An N-terminal signal peptide occupies residues 1 to 19 (MKCFAQIVVLLLVIAFSHG). 5 cysteine pairs are disulfide-bonded: Cys26–Cys38, Cys32–Cys50, Cys37–Cys78, Cys60–Cys86, and Cys80–Cys95.

It belongs to the AVIT (prokineticin) family. In terms of tissue distribution, expressed by the skin glands.

The protein localises to the secreted. Its function is as follows. Potent agonist for both PKR1/PROKR1 and PKR2/PROKR2, and inducer of a potent and long-lasting hyperalgesia. Also potentiates capsaicin-induced TRPV1 current, when tested on DRG neurons. At subnanomolar concentrations, this protein both induces potent chemotaxis of macrophages and stimulates LPS-induced production of the pro-inflammatory cytokines IL-1 and IL-12. In vivo, potently stimulates the contraction of the guinea-pig gastrointestinal (GI) smooth muscle (nanomolar concentration). This chain is Prokineticin Bm8-d, found in Bombina maxima (Giant fire-bellied toad).